We begin with the raw amino-acid sequence, 701 residues long: DNA ligase (701 aa).

Residues 50-54, 99-100, and E130 contribute to the NAD(+) site; these read DYEYD and SL. K132 serves as the catalytic N6-AMP-lysine intermediate. NAD(+)-binding residues include R153, E187, K301, and K325. 4 residues coordinate Zn(2+): C419, C422, C437, and C442. Residues 626–701 form the BRCT domain; it reads NEHQKYMNKT…EIITEPFWDN (76 aa).

It belongs to the NAD-dependent DNA ligase family. LigA subfamily. Mg(2+) serves as cofactor. Requires Mn(2+) as cofactor.

It catalyses the reaction NAD(+) + (deoxyribonucleotide)n-3'-hydroxyl + 5'-phospho-(deoxyribonucleotide)m = (deoxyribonucleotide)n+m + AMP + beta-nicotinamide D-nucleotide.. DNA ligase that catalyzes the formation of phosphodiester linkages between 5'-phosphoryl and 3'-hydroxyl groups in double-stranded DNA using NAD as a coenzyme and as the energy source for the reaction. It is essential for DNA replication and repair of damaged DNA. In Malacoplasma penetrans (strain HF-2) (Mycoplasma penetrans), this protein is DNA ligase.